An 81-amino-acid chain; its full sequence is Acyl carrier protein (81 aa).

One can recognise a Carrier domain in the interval 3-78 (QEIFDKIKNI…EAVNIIAEKT (76 aa)). Residue S38 is modified to O-(pantetheine 4'-phosphoryl)serine.

The protein belongs to the acyl carrier protein (ACP) family. In terms of processing, 4'-phosphopantetheine is transferred from CoA to a specific serine of apo-ACP by AcpS. This modification is essential for activity because fatty acids are bound in thioester linkage to the sulfhydryl of the prosthetic group.

It is found in the cytoplasm. The protein operates within lipid metabolism; fatty acid biosynthesis. In terms of biological role, carrier of the growing fatty acid chain in fatty acid biosynthesis. This Picosynechococcus sp. (strain ATCC 27264 / PCC 7002 / PR-6) (Agmenellum quadruplicatum) protein is Acyl carrier protein.